We begin with the raw amino-acid sequence, 227 residues long: Probable FKBP-type 25 kDa peptidyl-prolyl cis-trans isomerase (227 aa).

The PPIase FKBP-type domain maps to 144–227 (ATQVHVRYRG…VFEIDLLGFR (84 aa)).

The protein belongs to the FKBP-type PPIase family.

It carries out the reaction [protein]-peptidylproline (omega=180) = [protein]-peptidylproline (omega=0). In terms of biological role, PPIases accelerate the folding of proteins. The protein is Probable FKBP-type 25 kDa peptidyl-prolyl cis-trans isomerase (fkl) of Pseudomonas aeruginosa (strain ATCC 15692 / DSM 22644 / CIP 104116 / JCM 14847 / LMG 12228 / 1C / PRS 101 / PAO1).